We begin with the raw amino-acid sequence, 520 residues long: Protein U4 (520 aa).

This sequence belongs to the herpesviridae U4 family.

In Elephantid herpesvirus 1 (isolate Asian elephant/Berlin/Kiba/1998) (EIHV-1), this protein is Protein U4.